Reading from the N-terminus, the 492-residue chain is GlcNAc-binding protein A (492 aa).

The first 23 residues, 1–23 (MNKSSTKTLIALSMMAVSSGVSA), serve as a signal peptide directing secretion. One can recognise a Chitin-binding type-4 domain in the interval 24-204 (HGYVSETNDG…AFYNVIDVKF (181 aa)). A Chitin-binding type-3 domain is found at 443 to 484 (AGTKVLAEDSNVYQCKEFPYSGYCVQWTETATNFAPGVGSDW).

The protein belongs to the GbpA family.

Its subcellular location is the secreted. Its function is as follows. Probably interacts with GlcNAc residues. May promote attachment to both epithelial cell surfaces and chitin. The polypeptide is GlcNAc-binding protein A (Aliivibrio fischeri (strain MJ11) (Vibrio fischeri)).